Here is a 212-residue protein sequence, read N- to C-terminus: MTDYITIAIPKGRILEESVTLFGKIGINCDELLSNTRKLIFENHEQRMRYMIVRATDVPTYVEYGCADLGIVGKDTLMEQEKDLYEPLDLKFGYCRMMVAEPAGLALDDDPSSWTNIRIATKYPNVTEKYFARKGVQVEIIKLYGSIELAPLVGLSERIVDLVSTGETLRQNGLVEVETIAEITTRLIVNRASLKTKHPRITEIIEGLEKHV.

It belongs to the ATP phosphoribosyltransferase family. Short subfamily. In terms of assembly, heteromultimer composed of HisG and HisZ subunits.

The protein localises to the cytoplasm. The enzyme catalyses 1-(5-phospho-beta-D-ribosyl)-ATP + diphosphate = 5-phospho-alpha-D-ribose 1-diphosphate + ATP. Its pathway is amino-acid biosynthesis; L-histidine biosynthesis; L-histidine from 5-phospho-alpha-D-ribose 1-diphosphate: step 1/9. In terms of biological role, catalyzes the condensation of ATP and 5-phosphoribose 1-diphosphate to form N'-(5'-phosphoribosyl)-ATP (PR-ATP). Has a crucial role in the pathway because the rate of histidine biosynthesis seems to be controlled primarily by regulation of HisG enzymatic activity. This chain is ATP phosphoribosyltransferase 2 (hisG2), found in Geobacter sulfurreducens (strain ATCC 51573 / DSM 12127 / PCA).